A 619-amino-acid polypeptide reads, in one-letter code: Type VI secretion system component TssF1 (619 aa).

As to quaternary structure, interacts with TssA1.

Functionally, core component of the H1 type VI (H1-T6SS) secretion system that plays a role in the release of toxins targeting both eukaryotic and prokaryotic species. This is Type VI secretion system component TssF1 from Pseudomonas aeruginosa (strain ATCC 15692 / DSM 22644 / CIP 104116 / JCM 14847 / LMG 12228 / 1C / PRS 101 / PAO1).